Here is a 470-residue protein sequence, read N- to C-terminus: Cyclic AMP receptor-like protein D (470 aa).

At 1-16 the chain is on the extracellular side; that stretch reads MSSCSSLSMDDRVKIG. The chain crosses the membrane as a helical span at residues 17–37; that stretch reads YGSIAGASLSIIGSIGTIILI. Residues 38-123 are Cytoplasmic-facing; sequence KIRNKKQEKK…NNNQKTKVSH (86 aa). A helical transmembrane segment spans residues 124–144; it reads FIINLSIANLLASIFMITIKL. The Extracellular segment spans residues 145–176; it reads MMIHFNDKFIKVLPSTANHSFNALISVCTIGN. N-linked (GlcNAc...) asparagine glycosylation occurs at asparagine 162. Cysteine 172 and cysteine 287 form a disulfide bridge. The helical transmembrane segment at 177–197 threads the bilayer; sequence GVIGFSFISTFFWTLAISMYI. Over 198–253 the chain is Cytoplasmic; sequence YQQFLSSSTINSNNNNNNINNINNNNNNNINNINNSKNNNSINNFNNSNKSNKIIK. The chain crosses the membrane as a helical span at residues 254–274; the sequence is MLFYFVCWVIPFVLGSILVSG. The Extracellular segment spans residues 275–295; sequence SRLIELNSDLPWCSIDSNIQL. Residues 296–316 form a helical membrane-spanning segment; it reads ISFYFPLIICLLATTFFTILI. At 317 to 342 the chain is on the cytoplasmic side; sequence KYKFSNDKLACSSSSLINLQSKIIQR. The helical transmembrane segment at 343–363 threads the bilayer; it reads LILFLIVILVCWVPSLISFFI. The Extracellular segment spans residues 364–372; sequence SFFSKNCKQ. The chain crosses the membrane as a helical span at residues 373–393; sequence FLWLEIISSTIQSCQGILNFL. The Cytoplasmic segment spans residues 394 to 470; sequence SYLSIFKKLK…DFDNNQIQEK (77 aa).

Belongs to the G-protein coupled receptor 5 family.

Its subcellular location is the membrane. Its function is as follows. Receptor for cAMP. The polypeptide is Cyclic AMP receptor-like protein D (crlD) (Dictyostelium discoideum (Social amoeba)).